The primary structure comprises 525 residues: Mitoguardin (525 aa).

The chain crosses the membrane as a helical span at residues 26–45 (VVLFSLTAGVALMSVLSRFL). The span at 47-67 (RRKPPRPPRRARKYTGRRNRN) shows a compositional bias: basic residues. 2 disordered regions span residues 47-73 (RRKP…RSPN) and 210-239 (DEAE…GSDP). Residues 211 to 220 (EAEEEAGEAD) are compositionally biased toward acidic residues.

It belongs to the mitoguardin family. As to quaternary structure, interacts with zuc.

It is found in the mitochondrion outer membrane. In terms of biological role, regulator of mitochondrial fusion required to maintain neuronal homeostasis. The protein is Mitoguardin of Drosophila melanogaster (Fruit fly).